Here is a 349-residue protein sequence, read N- to C-terminus: sn-glycerol-3-phosphate import ATP-binding protein UgpC (349 aa).

The ABC transporter domain maps to 4–235 (ITLKDVHKTY…PATAFVATFI (232 aa)). 37 to 44 (GPSGCGKS) contributes to the ATP binding site.

This sequence belongs to the ABC transporter superfamily. sn-glycerol-3-phosphate importer (TC 3.A.1.1.3) family. The complex is composed of two ATP-binding proteins (UgpC), two transmembrane proteins (UgpA and UgpE) and a solute-binding protein (UgpB).

Its subcellular location is the cell inner membrane. The catalysed reaction is sn-glycerol 3-phosphate(out) + ATP + H2O = sn-glycerol 3-phosphate(in) + ADP + phosphate + H(+). Functionally, part of the ABC transporter complex UgpBAEC involved in sn-glycerol-3-phosphate (G3P) import. Responsible for energy coupling to the transport system. The chain is sn-glycerol-3-phosphate import ATP-binding protein UgpC from Rhizobium meliloti (strain 1021) (Ensifer meliloti).